The chain runs to 1163 residues: MNREDRNVLRMKERERRNQEIQQGEDAFPPSSPLFAEPYKVTSKEDKLSSRIQSMLGNYDEMKDFIGDRSIPKLVAIPKPTVPPSADEKSNPNFFEQRHGGSHQSSKWTPVGPAPSTSQSQKRSSGLQSGHSSQRTSAGSSSGTNSSGQRHDRESYNNSGSSSRKKGQHGSEHSKSRSSSPGKPQAVSSLNSSHSRSHGNDHHSKEHQRSKSPRDPDANWDSPSRVPFSSGQHSTQSFPPSLMSKSNSMLQKPTAYVRPMDGQESMEPKLSSEHYSSQSHGNSMTELKPSSKAHLTKLKIPSQPLDASASGDVSCVDEILKEMTHSWPPPLTAIHTPCKTEPSKFPFPTKESQQSNFGTGEQKRYNPSKTSNGHQSKSMLKDDLKLSSSEDSDGEQDCDKTMPRSTPGSNSEPSHHNSEGADNSRDDSSSHSGSESSSGSDSESESSSSDSEANEPSQSASPEPEPPPTNKWQLDNWLNKVNPHKVSPASSVDSNIPSSQGYKKEGREQGTGNSYTDTSGPKETSSATPGRDSKTIQKGSESGRGRQKSPAQSDSTTQRRTVGKKQPKKAEKAAAEEPRGGLKIESETPVDLASSMPSSRHKAATKGSRKPNIKKESKSSPRPTAEKKKYKSTSKSSQKSREIIETDTSSSDSDESESLPPSSQTPKYPESNRTPVKPSSVEEEDSFFRQRMFSPMEEKELLSPLSEPDDRYPLIVKIDLNLLTRIPGKPYKETEPPKGEKKNVPEKHTREAQKQASEKVSNKGKRKHKNEDDNRASESKKPKTEDKNSAGHKPSSNRESSKQSAAKEKDLLPSPAGPVPSKDPKTEHGSRKRTISQSSSLKSSSNSNKETSGSSKNSSSTSKQKKTEGKTSSSSKEVKEKAPSSSSNCPPSAPTLDSSKPRRTKLVFDDRNYSADHYLQEAKKLKHNADALSDRFEKAVYYLDAVVSFIECGNALEKNAQESKSPFPMYSETVDLIKYTMKLKNYLAPDATAADKRLTVLCLRCESLLYLRLFKLKKENALKYSKTLTEHLKNSYNNSQAPSPGLGSKAVGMPSPVSPKLSPGNSGNYSSGASSASASGSSVTIPQKIHQMAASYVQVTSNFLYATEIWDQAEQLSKEQKEFFAELDKVMGPLIFNASIMTDLVRYTRQGLHWLRQDAKLIS.

Positions Met1–Gln19 are enriched in basic and acidic residues. Disordered stretches follow at residues Met1–Leu48, Ala76–Asp312, Thr324–Thr904, and Asn1034–Ala1073. The span at Pro115–Gln128 shows a compositional bias: polar residues. At Ser120 the chain carries Phosphoserine. Composition is skewed to low complexity over residues Ser129 to Gly148 and Arg177 to His194. Over residues His198–Asp217 the composition is skewed to basic and acidic residues. At Ser212 the chain carries Phosphoserine. Composition is skewed to polar residues over residues Pro227–Gln251, Glu273–Thr285, and Lys350–Gln375. Ser387, Ser388, Ser389, and Ser392 each carry phosphoserine. A compositionally biased stretch (polar residues) spans Pro403 to Glu412. Positions Pro413 to Ser429 are enriched in basic and acidic residues. Residues Ser430–Pro462 are compositionally biased toward low complexity. A phosphoserine mark is found at Ser487, Ser490, and Ser491. 3 stretches are compositionally biased toward polar residues: residues Pro488–Gly501, Gly510–Thr528, and Ser549–Arg560. Phosphoserine is present on Ser549. Residues Lys568–Ser586 are compositionally biased toward basic and acidic residues. Lys583 is covalently cross-linked (Glycyl lysine isopeptide (Lys-Gly) (interchain with G-Cter in SUMO2)). A compositionally biased stretch (basic residues) spans Ser599 to Asn612. Residues Ile613–Lys627 show a composition bias toward basic and acidic residues. Ser671 bears the Phosphoserine mark. Residue Thr674 is modified to Phosphothreonine. Ser680, Ser694, Ser703, and Ser706 each carry phosphoserine. Tyr712 carries the phosphotyrosine modification. Basic and acidic residues-rich tracts occupy residues Pro730–Ser761, Lys769–Ser789, and Glu799–Leu811. Position 814 is a phosphoserine (Ser814). Lys822 carries the post-translational modification N6-acetyllysine. Phosphoserine occurs at positions 836, 1043, 1055, 1058, and 1062. Over residues Ser836 to Ser862 the composition is skewed to low complexity. The span at Ser1062–Ala1073 shows a compositional bias: low complexity.

Belongs to the AF4 family. Component of the super elongation complex (SEC), at least composed of EAF1, EAF2, CDK9, MLLT3/AF9, AFF (AFF1 or AFF4), the P-TEFb complex and ELL (ELL, ELL2 or ELL3). Interacts with ELL3; the interaction is direct. Interacts with ELL2; the interaction is direct and leads to stabilize ELL2 and prevent ELL2 ubiquitination and degradation. Dephosphorylated at Ser-549 by the PNUTS-PP1 complex, promoting RNA polymerase II transcription pause-release. In terms of tissue distribution, ubiquitously expressed. Strongly expressed in heart, placenta, skeletal muscle, pancreas and to a lower extent in brain.

It localises to the nucleus. It is found in the chromosome. Its function is as follows. Key component of the super elongation complex (SEC), a complex required to increase the catalytic rate of RNA polymerase II transcription by suppressing transient pausing by the polymerase at multiple sites along the DNA. In the SEC complex, AFF4 acts as a central scaffold that recruits other factors through direct interactions with ELL proteins (ELL, ELL2 or ELL3) and the P-TEFb complex. In case of infection by HIV-1 virus, the SEC complex is recruited by the viral Tat protein to stimulate viral gene expression. The polypeptide is AF4/FMR2 family member 4 (AFF4) (Homo sapiens (Human)).